The chain runs to 356 residues: MITTGTPTTRRSAAGTAGADLCPVERCGEPARPGGRLERQQPSPLSPGQRPLADANARRPVAVFAETFGLLAGQLDRQTRREGRAMLRLIDSTPIPLGKLCGWAKSNGRIRGMKMHVVYDPDSDCPRLLDITDANVNDAQIGRTIAIESGATYIFDKGYCHYGWWTAIAEAKAFFVTRPKSNMGLKVVRQRRIKVAEGDGFTVIDDATVRLASKGDSKLPIPLRRLTVKRADGDTITLLTNDRKRPAVAIAALYKGRWQIELLFRWIKQHLKIRSFLGNNDNAVRLQLFAAMIAYALLRIAARLNRITMPILRFTDLVIRCLFERRDIAAIERPPPVNPSHRRPRCSPHQMSFAYV.

The span at 1 to 19 shows a compositional bias: low complexity; it reads MITTGTPTTRRSAAGTAGA. 2 disordered regions span residues 1-54 and 334-356; these read MITT…PLAD and PPPVNPSHRRPRCSPHQMSFAYV.

Belongs to the transposase 11 family.

The sequence is that of Putative transposase y4zB from Sinorhizobium fredii (strain NBRC 101917 / NGR234).